The chain runs to 274 residues: Diaminopimelate epimerase (274 aa).

3 residues coordinate substrate: N11, Q44, and N64. Residue C73 is the Proton donor of the active site. Substrate is bound by residues 74–75 (GN), N157, N190, and 208–209 (ER). The active-site Proton acceptor is C217. 218–219 (GS) lines the substrate pocket.

This sequence belongs to the diaminopimelate epimerase family. As to quaternary structure, homodimer.

It localises to the cytoplasm. It carries out the reaction (2S,6S)-2,6-diaminopimelate = meso-2,6-diaminopimelate. It functions in the pathway amino-acid biosynthesis; L-lysine biosynthesis via DAP pathway; DL-2,6-diaminopimelate from LL-2,6-diaminopimelate: step 1/1. In terms of biological role, catalyzes the stereoinversion of LL-2,6-diaminopimelate (L,L-DAP) to meso-diaminopimelate (meso-DAP), a precursor of L-lysine and an essential component of the bacterial peptidoglycan. The sequence is that of Diaminopimelate epimerase from Photorhabdus laumondii subsp. laumondii (strain DSM 15139 / CIP 105565 / TT01) (Photorhabdus luminescens subsp. laumondii).